An 880-amino-acid chain; its full sequence is Valine--tRNA ligase (880 aa).

The 'HIGH' region signature appears at 47 to 57 (PNITGKLHLGH). The 'KMSKS' region motif lies at 526-530 (KMSKS). K529 provides a ligand contact to ATP. Positions 810–845 (LLDLVDREKELERLNKEKTKLEGEILRVEKKLSNER) form a coiled coil.

Belongs to the class-I aminoacyl-tRNA synthetase family. ValS type 1 subfamily. Monomer.

It is found in the cytoplasm. The catalysed reaction is tRNA(Val) + L-valine + ATP = L-valyl-tRNA(Val) + AMP + diphosphate. Catalyzes the attachment of valine to tRNA(Val). As ValRS can inadvertently accommodate and process structurally similar amino acids such as threonine, to avoid such errors, it has a 'posttransfer' editing activity that hydrolyzes mischarged Thr-tRNA(Val) in a tRNA-dependent manner. The chain is Valine--tRNA ligase from Clostridium perfringens (strain 13 / Type A).